Here is a 461-residue protein sequence, read N- to C-terminus: Smoothelin-like protein 2 (461 aa).

Positions 55–88 form a coiled coil; it reads PLARTVADLQRDNQRLQAQLERLTRQVEALGLAS. 2 disordered regions span residues 87 to 193 and 227 to 248; these read ASGM…LRLP and LNPS…KNSS. Pro residues predominate over residues 94–107; that stretch reads PGTPGTPSPPPAPG. Position 96 is a phosphothreonine (Thr96). A phosphoserine mark is found at Ser101, Ser129, and Ser134. Basic and acidic residues predominate over residues 134 to 147; that stretch reads SLDHDEASESEMRK. Phosphoserine is present on residues Ser256 and Ser269. A disordered region spans residues 260–307; that stretch reads AVTASKHSNSPPLVTPPQSPVSPQPPAITQVHRQGERRRELVRSQTLP. The segment covering 272–285 has biased composition (pro residues); that stretch reads LVTPPQSPVSPQPP. Phosphothreonine is present on Thr274. Ser278 is modified (phosphoserine). Positions 292–301 are enriched in basic and acidic residues; the sequence is RQGERRRELV. Ser344 is modified (phosphoserine). The region spanning 351-458 is the Calponin-homology (CH) domain; sequence SSIKQILLEW…YVQSLYNHLR (108 aa).

The protein belongs to the smoothelin family.

This Homo sapiens (Human) protein is Smoothelin-like protein 2 (SMTNL2).